The sequence spans 599 residues: Putative sensor histidine kinase NtrY-like (599 aa).

4 consecutive transmembrane segments (helical) span residues V17–I37, F44–L64, I85–V105, and I285–F305. An HAMP domain is found at A307 to R361. Residues K378–K589 enclose the Histidine kinase domain. H381 is modified (phosphohistidine; by autocatalysis).

It localises to the cell membrane. The enzyme catalyses ATP + protein L-histidine = ADP + protein N-phospho-L-histidine.. Functionally, member of the two-component regulatory system RF_0427/RF_0895. The protein is Putative sensor histidine kinase NtrY-like of Rickettsia felis (strain ATCC VR-1525 / URRWXCal2) (Rickettsia azadi).